The sequence spans 657 residues: KNR4/SMI1 homolog (657 aa).

Disordered regions lie at residues 168 to 193 (EQQQ…QKGY), 366 to 402 (SSSV…ESVS), and 416 to 657 (LTQT…TVAL). The span at 174 to 187 (KSSSELPQTVTPQA) shows a compositional bias: polar residues. Positions 416–436 (LTQTDASSKGTTKPATPNPMT) are enriched in polar residues. 2 stretches are compositionally biased toward low complexity: residues 444–455 (STPGSPSAAAEA) and 473–482 (TPTVTKESTP). Residues 492 to 504 (LDSKNTETNEDTR) are compositionally biased toward basic and acidic residues. Positions 505-521 (ATNTAHSMAPTVSSAIT) are enriched in polar residues. Basic and acidic residues-rich tracts occupy residues 535–561 (KPKD…KANE), 569–604 (VEPK…EKKV), and 627–650 (KSDK…KLNE).

This sequence belongs to the KNR4/SMI1 family.

This Eremothecium gossypii (strain ATCC 10895 / CBS 109.51 / FGSC 9923 / NRRL Y-1056) (Yeast) protein is KNR4/SMI1 homolog.